Here is a 525-residue protein sequence, read N- to C-terminus: Vesicular inhibitory amino acid transporter (525 aa).

Topologically, residues 1 to 132 are cytoplasmic; it reads MATLLRSKLT…WNVTNAIQGM (132 aa). Residues 133-153 traverse the membrane as a helical segment; the sequence is FVLGLPYAILHGGYLGLFLII. The Lumenal, vesicle portion of the chain corresponds to 154–204; sequence FAAVVCCYTGKILIACLYEENEDGEVVRVRDSYVAIANACCAPRFPTLGGR. Y186 is subject to 3'-nitrotyrosine. The chain crosses the membrane as a helical span at residues 205 to 225; that stretch reads VVNVAQIIELVMTCILYVVVS. The Cytoplasmic portion of the chain corresponds to 226–265; that stretch reads GNLMYNSFPGLPVSQKSWSIIATAVLLPCAFLKNLKAVSK. The helical transmembrane segment at 266 to 286 threads the bilayer; sequence FSLLCTLAHFVINILVIAYCL. The Lumenal, vesicle segment spans residues 287-305; sequence SRARDWAWEKVKFYIDVKK. The chain crosses the membrane as a helical span at residues 306 to 326; it reads FPISIGIIVFSYTSQIFLPSL. At 327-341 the chain is on the cytoplasmic side; it reads EGNMQQPSEFHCMMN. Residues 342-362 traverse the membrane as a helical segment; sequence WTHIAACVLKGLFALVAYLTW. Topologically, residues 363–383 are lumenal, vesicle; sequence ADETKEVITDNLPGSIRAVVN. A helical transmembrane segment spans residues 384 to 404; the sequence is IFLVAKALLSYPLPFFAAVEV. The Cytoplasmic segment spans residues 405–438; the sequence is LEKSLFQEGSRAFFPACYGGDGRLKSWGLTLRCA. A helical transmembrane segment spans residues 439–459; it reads LVVFTLLMAIYVPHFALLMGL. Over 460-461 the chain is Lumenal, vesicle; that stretch reads TG. The chain crosses the membrane as a helical span at residues 462–482; the sequence is SLTGAGLCFLLPSLFHLRLLW. The Cytoplasmic portion of the chain corresponds to 483-489; the sequence is RKLLWHQ. The chain crosses the membrane as a helical span at residues 490-510; it reads VFFDVAIFVIGGICSVSGFVH. Topologically, residues 511–525 are lumenal, vesicle; that stretch reads SLEGLIEAYRTNAED.

This sequence belongs to the amino acid/polyamine transporter 2 family. Brain. Expressed at high levels within the neocortex, hippocampus, cerebellum, striatum, septal nuclei and the reticular nucleus of the thalamus. Also expressed in islets where it is more abundant in the peripheral/mantle region. Highly expressed in the nerve endings of GABA neurons in the brain and spinal cord but also in glycinergic nerve endings. Expressed in glycine-, GABA- or GABA- and glycine-containing boutons.

Its subcellular location is the cytoplasmic vesicle. It localises to the secretory vesicle. The protein resides in the synaptic vesicle membrane. The protein localises to the presynapse. It catalyses the reaction beta-alanine(out) + n H(+)(in) = beta-alanine(in) + n H(+)(out). It carries out the reaction 4-aminobutanoate(out) + n H(+)(in) = 4-aminobutanoate(in) + n H(+)(out). The catalysed reaction is glycine(out) + n H(+)(in) = glycine(in) + n H(+)(out). Antiporter that exchanges vesicular protons for cytosolic 4-aminobutanoate or to a lesser extend glycine, thus allowing their secretion from nerve terminals. The transport is equally dependent on the chemical and electrical components of the proton gradient. May also transport beta-alanine. Acidification of GABAergic synaptic vesicles is a prerequisite for 4-aminobutanoate uptake. This chain is Vesicular inhibitory amino acid transporter, found in Rattus norvegicus (Rat).